Here is a 163-residue protein sequence, read N- to C-terminus: MELPAVNLKAIVFTHWLLTVFACMIDWLPKAYGLANITILAMGVWAIAQRDSIDAIFMFLIGLLLTILTDILLFALYFTEAEKASESGPLRDLFRFSSGMGIFSLLLKPLSCFFMYHMYRERGGEYFVNLGFITLSRDRSSYQSIEHMDPPADQDNKLPSRTY.

The Extracellular segment spans residues 1 to 28 (MELPAVNLKAIVFTHWLLTVFACMIDWL). The chain crosses the membrane as a helical span at residues 29-49 (PKAYGLANITILAMGVWAIAQ). At 50–55 (RDSIDA) the chain is on the cytoplasmic side. A helical transmembrane segment spans residues 56-76 (IFMFLIGLLLTILTDILLFAL). The Extracellular segment spans residues 77–95 (YFTEAEKASESGPLRDLFR). A helical transmembrane segment spans residues 96-116 (FSSGMGIFSLLLKPLSCFFMY). Residues 117 to 163 (HMYRERGGEYFVNLGFITLSRDRSSYQSIEHMDPPADQDNKLPSRTY) are Cytoplasmic-facing.

The protein resides in the membrane. Appears to be a negative regulator of angiotensin II type I receptor-mediated signaling. This is Type-1 angiotensin II receptor-associated protein-like (agtrap) from Xenopus tropicalis (Western clawed frog).